The primary structure comprises 332 residues: Glyceraldehyde-3-phosphate dehydrogenase 2 (332 aa).

Residues 11–12 (RI), Asp32, and Arg77 each bind NAD(+). D-glyceraldehyde 3-phosphate is bound by residues 148–150 (SCT), Thr179, 208–209 (TG), and Arg231. The Nucleophile role is filled by Cys149. Asn313 is an NAD(+) binding site.

It belongs to the glyceraldehyde-3-phosphate dehydrogenase family. Homotetramer.

Its subcellular location is the cytoplasm. It catalyses the reaction D-glyceraldehyde 3-phosphate + phosphate + NAD(+) = (2R)-3-phospho-glyceroyl phosphate + NADH + H(+). The protein operates within carbohydrate degradation; glycolysis; pyruvate from D-glyceraldehyde 3-phosphate: step 1/5. This is Glyceraldehyde-3-phosphate dehydrogenase 2 (Gapdh2) from Drosophila pseudoobscura pseudoobscura (Fruit fly).